The chain runs to 337 residues: Ketol-acid reductoisomerase (NADP(+)) (337 aa).

The 180-residue stretch at 1–180 (MFYEKDADVD…GGGKSGIIET (180 aa)) folds into the KARI N-terminal Rossmann domain. NADP(+) is bound by residues 22-25 (YGSQ), Arg46, Ser49, Ser51, and 81-84 (DELQ). His106 is an active-site residue. Residue Gly132 participates in NADP(+) binding. A KARI C-terminal knotted domain is found at 181–326 (TFKDECETDL…AELRAMMPWI (146 aa)). The Mg(2+) site is built by Asp189, Glu193, Glu225, and Glu229. Ser250 serves as a coordination point for substrate.

This sequence belongs to the ketol-acid reductoisomerase family. Mg(2+) is required as a cofactor.

The catalysed reaction is (2R)-2,3-dihydroxy-3-methylbutanoate + NADP(+) = (2S)-2-acetolactate + NADPH + H(+). It catalyses the reaction (2R,3R)-2,3-dihydroxy-3-methylpentanoate + NADP(+) = (S)-2-ethyl-2-hydroxy-3-oxobutanoate + NADPH + H(+). Its pathway is amino-acid biosynthesis; L-isoleucine biosynthesis; L-isoleucine from 2-oxobutanoate: step 2/4. It functions in the pathway amino-acid biosynthesis; L-valine biosynthesis; L-valine from pyruvate: step 2/4. Involved in the biosynthesis of branched-chain amino acids (BCAA). Catalyzes an alkyl-migration followed by a ketol-acid reduction of (S)-2-acetolactate (S2AL) to yield (R)-2,3-dihydroxy-isovalerate. In the isomerase reaction, S2AL is rearranged via a Mg-dependent methyl migration to produce 3-hydroxy-3-methyl-2-ketobutyrate (HMKB). In the reductase reaction, this 2-ketoacid undergoes a metal-dependent reduction by NADPH to yield (R)-2,3-dihydroxy-isovalerate. The polypeptide is Ketol-acid reductoisomerase (NADP(+)) (Pelagibacter ubique (strain HTCC1062)).